We begin with the raw amino-acid sequence, 136 residues long: Antistasin (136 aa).

Residues 1–17 form the signal peptide; the sequence is MIKLAILLLFTVAIVRC. Residue glutamine 18 is modified to Pyrrolidone carboxylic acid. 10 disulfides stabilise this stretch: cysteine 25-cysteine 36, cysteine 30-cysteine 43, cysteine 45-cysteine 65, cysteine 50-cysteine 68, cysteine 54-cysteine 70, cysteine 79-cysteine 90, cysteine 84-cysteine 97, cysteine 99-cysteine 120, cysteine 105-cysteine 123, and cysteine 109-cysteine 125. An Antistasin-like 1 domain is found at 45-70; that stretch reads CSGVRCRMHCPHGFQRSRYGCEFCKC. The Antistasin-like 2 domain occupies 100 to 125; that stretch reads KIDINCRKTCPNGLKRDKLGCEYCEC. Residues 114 to 117 and 128 to 135 each bind heparin; these read KRDK and KRKLIPRL.

Belongs to the protease inhibitor I15 (antistasin) family.

Its subcellular location is the secreted. This highly disulfide-bonded protein is a potent inhibitor of factor Xa. May have therapeutic utility as an anticoagulant. Also exhibits a strong metastatic activity. This chain is Antistasin, found in Haementeria officinalis (Mexican leech).